The chain runs to 476 residues: 3-isopropylmalate dehydratase large subunit (476 aa).

Residues C353, C413, and C416 each coordinate [4Fe-4S] cluster.

It belongs to the aconitase/IPM isomerase family. LeuC type 1 subfamily. In terms of assembly, heterodimer of LeuC and LeuD. It depends on [4Fe-4S] cluster as a cofactor.

The catalysed reaction is (2R,3S)-3-isopropylmalate = (2S)-2-isopropylmalate. It functions in the pathway amino-acid biosynthesis; L-leucine biosynthesis; L-leucine from 3-methyl-2-oxobutanoate: step 2/4. Functionally, catalyzes the isomerization between 2-isopropylmalate and 3-isopropylmalate, via the formation of 2-isopropylmaleate. The protein is 3-isopropylmalate dehydratase large subunit of Yersinia pseudotuberculosis serotype O:1b (strain IP 31758).